Reading from the N-terminus, the 73-residue chain is MKATLLLLLLFAVILPGTISAEQEKPGSCPNVDMPIPPLGLCKTTCSKDSDCSETKKCCKNGCGFMTCTTARP.

A signal peptide spans 1 to 21 (MKATLLLLLLFAVILPGTISA). Residues 22-72 (EQEKPGSCPNVDMPIPPLGLCKTTCSKDSDCSETKKCCKNGCGFMTCTTAR) form the WAP domain. Intrachain disulfides connect Cys29-Cys59, Cys42-Cys63, Cys46-Cys58, and Cys52-Cys68.

Belongs to the venom waprin family. As to expression, expressed by the venom gland.

The protein localises to the secreted. Its function is as follows. Damages membranes of susceptible bacteria. Has no hemolytic activity. Not toxic to mice. Does not inhibit the proteinases elastase and cathepsin G. The chain is Waprin-Phi2 from Philodryas olfersii (Green snake).